We begin with the raw amino-acid sequence, 987 residues long: Ras guanine nucleotide exchange factor efc25 (987 aa).

Over residues 1–10 (MRRPNLDRLR) the composition is skewed to basic and acidic residues. Disordered stretches follow at residues 1–50 (MRRP…STMS), 100–130 (FSST…PEIR), and 529–552 (NANT…ISRS). Residues 19–39 (TSVSKPSTPSYSTYSLSPTFS) show a composition bias toward low complexity. Polar residues-rich tracts occupy residues 40 to 50 (DKSVLSPSTMS), 102 to 111 (STHSLTRQPS), and 540 to 552 (RQTN…ISRS). Ser552 bears the Phosphoserine mark. The N-terminal Ras-GEF domain occupies 590 to 723 (SDNNVKGGTL…VILSEIDNLW (134 aa)). Residues 752-985 (TPEEFASQMT…FDKSLSLEPR (234 aa)) enclose the Ras-GEF domain.

It is found in the cytoplasm. Functionally, has a role in chromosome segregation and cell morphology upstream of the ras1-scd1 pathway. Promotes the exchange of ras1-bound GDP by GTP leading to its activation. This is Ras guanine nucleotide exchange factor efc25 (efc25) from Schizosaccharomyces pombe (strain 972 / ATCC 24843) (Fission yeast).